The chain runs to 720 residues: Mitogen-activated protein kinase 6 (720 aa).

A Peptide (Met-Gly) (interchain with G-Cter in ubiquitin) cross-link involves residue methionine 1. Positions 20–316 (YMDLKPLGCG…AEEALSHPYM (297 aa)) constitute a Protein kinase domain. ATP-binding positions include 26 to 34 (LGCGGNGLV) and lysine 49. The active-site Proton acceptor is aspartate 152. Position 189 is a phosphoserine; by PAK1, PAK2 and PAK3 (serine 189). Residues 189–191 (SEG) carry the SEG motif motif. The short motif at 332–337 (FHIEDE) is the FRIEDE motif element. 3 positions are modified to phosphoserine: serine 386, serine 554, and serine 556. Residues 638–657 (SEMLETEPVEEGKRGERGRE) form a disordered region. A compositionally biased stretch (basic and acidic residues) spans 647–657 (EEGKRGERGRE). Residue serine 683 is modified to Phosphoserine. Residues 700 to 714 (AMKSSPQIPHKTYSS) show a composition bias toward polar residues. The segment at 700–720 (AMKSSPQIPHKTYSSILKHLN) is disordered.

Belongs to the protein kinase superfamily. CMGC Ser/Thr protein kinase family. MAP kinase subfamily. Heterodimer with ERK4/MAPK4. Interacts with (via FRIEDE motif) MAPKAPK5. Interacts with UBE3A; this interaction may be indirect and mediated by HERC2, possibly via HERC2 interaction with NEURL4. Requires Mg(2+) as cofactor. In terms of processing, phosphorylated at Ser-189 by PAK1, PAK2 and PAK3 resulting in catalytic activation. Phosphorylated by MAPKAPK5 at other sites. Post-translationally, ubiquitination at Met-1 leads to degradation by the proteasome pathway.

It is found in the cytoplasm. Its subcellular location is the nucleus. It catalyses the reaction L-seryl-[protein] + ATP = O-phospho-L-seryl-[protein] + ADP + H(+). It carries out the reaction L-threonyl-[protein] + ATP = O-phospho-L-threonyl-[protein] + ADP + H(+). Its activity is regulated as follows. Activated by phosphorylation at Ser-189. Functionally, atypical MAPK protein. Phosphorylates microtubule-associated protein 2 (MAP2) and MAPKAPK5. The precise role of the complex formed with MAPKAPK5 is still unclear, but the complex follows a complex set of phosphorylation events: upon interaction with atypical MAPKAPK5, ERK3/MAPK6 is phosphorylated at Ser-189 and then mediates phosphorylation and activation of MAPKAPK5, which in turn phosphorylates ERK3/MAPK6. May promote entry in the cell cycle. The polypeptide is Mitogen-activated protein kinase 6 (Mapk6) (Mus musculus (Mouse)).